Here is a 74-residue protein sequence, read N- to C-terminus: Lambda-hexatoxin-Hv1d (74 aa).

The first 22 residues, 1–22 (MNTATCFIVLLVVATVIGGIEA), serve as a signal peptide directing secretion. Residues 23–35 (GESDMRKDVMGLF) constitute a propeptide that is removed on maturation. Cystine bridges form between Cys-40–Cys-54, Cys-47–Cys-59, Cys-50–Cys-51, and Cys-53–Cys-69.

It belongs to the neurotoxin 11 (kappa toxin) family. As to expression, expressed by the venom gland.

The protein resides in the secreted. Its function is as follows. This excitatory toxin inhibits insect calcium-activated potassium (KCa) channels (Slo-type). The polypeptide is Lambda-hexatoxin-Hv1d (Hadronyche versuta (Blue mountains funnel-web spider)).